A 540-amino-acid polypeptide reads, in one-letter code: Phosphoenolpyruvate carboxykinase (ATP) (540 aa).

A substrate-binding site is contributed by Arg65. Lys87 carries the N6-acetyllysine modification. Residues Tyr207 and Lys213 each coordinate substrate. Residues Lys213, His232, and Gly248 to Thr256 each bind ATP. The Mn(2+) site is built by Lys213 and His232. Asp269 contacts Mn(2+). ATP contacts are provided by residues Glu297, Arg333, Arg449–Ile450, and Thr455. Arg333 contributes to the substrate binding site. N6-acetyllysine is present on Lys523.

Belongs to the phosphoenolpyruvate carboxykinase (ATP) family. In terms of assembly, monomer. Mn(2+) serves as cofactor.

It is found in the cytoplasm. The catalysed reaction is oxaloacetate + ATP = phosphoenolpyruvate + ADP + CO2. Its pathway is carbohydrate biosynthesis; gluconeogenesis. Involved in the gluconeogenesis. Catalyzes the conversion of oxaloacetate (OAA) to phosphoenolpyruvate (PEP) through direct phosphoryl transfer between the nucleoside triphosphate and OAA. The protein is Phosphoenolpyruvate carboxykinase (ATP) of Escherichia coli O45:K1 (strain S88 / ExPEC).